A 348-amino-acid polypeptide reads, in one-letter code: Holliday junction branch migration complex subunit RuvB (348 aa).

The segment at 1 to 181 (MEERMITPQQ…FGVISRLEFY (181 aa)) is large ATPase domain (RuvB-L). Leu20, Arg21, Gly62, Lys65, Thr66, Thr67, Arg171, Tyr181, and Arg218 together coordinate ATP. Thr66 contacts Mg(2+). The interval 182 to 252 (EVEDLIRIIT…LAGKSLDRLE (71 aa)) is small ATPAse domain (RuvB-S). Positions 255–348 (PAGLDRIDQK…GDSLFDAAED (94 aa)) are head domain (RuvB-H). DNA-binding residues include Arg310 and Arg315. A disordered region spans residues 329 to 348 (VNSSHQEGGQGDSLFDAAED).

The protein belongs to the RuvB family. As to quaternary structure, homohexamer. Forms an RuvA(8)-RuvB(12)-Holliday junction (HJ) complex. HJ DNA is sandwiched between 2 RuvA tetramers; dsDNA enters through RuvA and exits via RuvB. An RuvB hexamer assembles on each DNA strand where it exits the tetramer. Each RuvB hexamer is contacted by two RuvA subunits (via domain III) on 2 adjacent RuvB subunits; this complex drives branch migration. In the full resolvosome a probable DNA-RuvA(4)-RuvB(12)-RuvC(2) complex forms which resolves the HJ.

The protein localises to the cytoplasm. The catalysed reaction is ATP + H2O = ADP + phosphate + H(+). The RuvA-RuvB-RuvC complex processes Holliday junction (HJ) DNA during genetic recombination and DNA repair, while the RuvA-RuvB complex plays an important role in the rescue of blocked DNA replication forks via replication fork reversal (RFR). RuvA specifically binds to HJ cruciform DNA, conferring on it an open structure. The RuvB hexamer acts as an ATP-dependent pump, pulling dsDNA into and through the RuvAB complex. RuvB forms 2 homohexamers on either side of HJ DNA bound by 1 or 2 RuvA tetramers; 4 subunits per hexamer contact DNA at a time. Coordinated motions by a converter formed by DNA-disengaged RuvB subunits stimulates ATP hydrolysis and nucleotide exchange. Immobilization of the converter enables RuvB to convert the ATP-contained energy into a lever motion, pulling 2 nucleotides of DNA out of the RuvA tetramer per ATP hydrolyzed, thus driving DNA branch migration. The RuvB motors rotate together with the DNA substrate, which together with the progressing nucleotide cycle form the mechanistic basis for DNA recombination by continuous HJ branch migration. Branch migration allows RuvC to scan DNA until it finds its consensus sequence, where it cleaves and resolves cruciform DNA. The protein is Holliday junction branch migration complex subunit RuvB of Desulfitobacterium hafniense (strain DSM 10664 / DCB-2).